Here is a 469-residue protein sequence, read N- to C-terminus: Crinkler effector protein 1 (469 aa).

The first 17 residues, 1 to 17 (MSITLLCLIKGNTLANA), serve as a signal peptide directing secretion. The segment at 18 to 57 (FPVDIDKDQLVGHLKKVIKAEQPQTFANVDAKDLKLWRVP) is LQLFLAK-like domain. The segment at 58–96 (ISDDHDDQLRNLSLEDSDELLAIRKISKYFPDSPPEECI) is DWL domain. Asn-68 is a glycosylation site (N-linked (GlcNAc...) asparagine). Residues 97 to 103 (HVLVEPP) carry the HVLVXXP motif motif. N-linked (GlcNAc...) asparagine glycans are attached at residues Asn-126, Asn-181, and Asn-248.

The protein belongs to the Crinkler effector family. Homodimer.

It is found in the secreted. The protein resides in the host nucleus. Functionally, effector that participates in the arbuscule development step of the symbiosis. Arbuscular mycorrhizal (AM) symbiosis is one of the most prominent and beneficial plant-microbe interactions that facilitates mineral nutrition and confers tolerance to biotic and abiotic stresses. Is not involved in cell death processes. In Rhizophagus irregularis (strain DAOM 181602 / DAOM 197198 / MUCL 43194) (Arbuscular mycorrhizal fungus), this protein is Crinkler effector protein 1.